We begin with the raw amino-acid sequence, 232 residues long: Octanoyltransferase (232 aa).

The 184-residue stretch at 33–216 (GRAQDTVILL…HLVRALSNGS (184 aa)) folds into the BPL/LPL catalytic domain. Residues 71-78 (RGGRITWH), 146-148 (AIG), and 159-161 (GFA) contribute to the substrate site. The active-site Acyl-thioester intermediate is cysteine 177.

It belongs to the LipB family.

It is found in the cytoplasm. The enzyme catalyses octanoyl-[ACP] + L-lysyl-[protein] = N(6)-octanoyl-L-lysyl-[protein] + holo-[ACP] + H(+). Its pathway is protein modification; protein lipoylation via endogenous pathway; protein N(6)-(lipoyl)lysine from octanoyl-[acyl-carrier-protein]: step 1/2. Functionally, catalyzes the transfer of endogenously produced octanoic acid from octanoyl-acyl-carrier-protein onto the lipoyl domains of lipoate-dependent enzymes. Lipoyl-ACP can also act as a substrate although octanoyl-ACP is likely to be the physiological substrate. This chain is Octanoyltransferase, found in Clavibacter sepedonicus (Clavibacter michiganensis subsp. sepedonicus).